The following is a 222-amino-acid chain: Deoxyribose-phosphate aldolase (222 aa).

D92 serves as the catalytic Proton donor/acceptor. K156 (schiff-base intermediate with acetaldehyde) is an active-site residue. K185 acts as the Proton donor/acceptor in catalysis.

Belongs to the DeoC/FbaB aldolase family. DeoC type 1 subfamily. As to quaternary structure, homodimer.

Its subcellular location is the cytoplasm. It catalyses the reaction 2-deoxy-D-ribose 5-phosphate = D-glyceraldehyde 3-phosphate + acetaldehyde. It functions in the pathway carbohydrate degradation; 2-deoxy-D-ribose 1-phosphate degradation; D-glyceraldehyde 3-phosphate and acetaldehyde from 2-deoxy-alpha-D-ribose 1-phosphate: step 2/2. Its activity is regulated as follows. Shows high stability to high concentrations of acetaldehyde. Its function is as follows. Catalyzes a reversible aldol reaction between acetaldehyde and D-glyceraldehyde 3-phosphate to generate 2-deoxy-D-ribose 5-phosphate. The protein is Deoxyribose-phosphate aldolase of Aciduliprofundum boonei (strain DSM 19572 / T469).